The sequence spans 349 residues: tRNA (guanine(26)-N(2))-dimethyltransferase (349 aa).

Positions 1–343 (MEVEEGRARV…ADRDVVVKIL (343 aa)) constitute a Trm1 methyltransferase domain. Positions 25, 50, 66, 92, and 93 each coordinate S-adenosyl-L-methionine.

It belongs to the class I-like SAM-binding methyltransferase superfamily. Trm1 family.

The catalysed reaction is guanosine(26) in tRNA + 2 S-adenosyl-L-methionine = N(2)-dimethylguanosine(26) in tRNA + 2 S-adenosyl-L-homocysteine + 2 H(+). Dimethylates a single guanine residue at position 26 of a number of tRNAs using S-adenosyl-L-methionine as donor of the methyl groups. This Archaeoglobus fulgidus (strain ATCC 49558 / DSM 4304 / JCM 9628 / NBRC 100126 / VC-16) protein is tRNA (guanine(26)-N(2))-dimethyltransferase.